Here is a 201-residue protein sequence, read N- to C-terminus: uncharacterized protein (201 aa).

The protein belongs to the phosphatidylethanolamine-binding protein family.

This is an uncharacterized protein from Saccharomyces cerevisiae (strain ATCC 204508 / S288c) (Baker's yeast).